Consider the following 497-residue polypeptide: Histidine--tRNA ligase (497 aa).

Belongs to the class-II aminoacyl-tRNA synthetase family. In terms of assembly, homodimer.

Its subcellular location is the cytoplasm. It catalyses the reaction tRNA(His) + L-histidine + ATP = L-histidyl-tRNA(His) + AMP + diphosphate + H(+). The protein is Histidine--tRNA ligase of Dinoroseobacter shibae (strain DSM 16493 / NCIMB 14021 / DFL 12).